The sequence spans 275 residues: NAD kinase (275 aa).

Catalysis depends on aspartate 66, which acts as the Proton acceptor. Residues 66-67 (DG), 138-139 (NE), histidine 168, aspartate 170, 181-186 (TAYNLS), and valine 205 each bind NAD(+).

The protein belongs to the NAD kinase family. The cofactor is a divalent metal cation.

It is found in the cytoplasm. It carries out the reaction NAD(+) + ATP = ADP + NADP(+) + H(+). In terms of biological role, involved in the regulation of the intracellular balance of NAD and NADP, and is a key enzyme in the biosynthesis of NADP. Catalyzes specifically the phosphorylation on 2'-hydroxyl of the adenosine moiety of NAD to yield NADP. This chain is NAD kinase, found in Halorubrum lacusprofundi (strain ATCC 49239 / DSM 5036 / JCM 8891 / ACAM 34).